Consider the following 190-residue polypeptide: Holliday junction branch migration complex subunit RuvA (190 aa).

Positions 1 to 65 (MIGNLSGIVD…ENVAQLYGFI (65 aa)) are domain I. A domain II region spans residues 66–143 (SKEEQQCLRL…KLEINNNNFH (78 aa)). The tract at residues 144 to 147 (PINE) is flexible linker. The domain III stretch occupies residues 147-190 (EDALSALINLGYEKMKAYDTIKKYRPNLDTKDIIRMALKELSIL).

The protein belongs to the RuvA family. In terms of assembly, homotetramer. Forms an RuvA(8)-RuvB(12)-Holliday junction (HJ) complex. HJ DNA is sandwiched between 2 RuvA tetramers; dsDNA enters through RuvA and exits via RuvB. An RuvB hexamer assembles on each DNA strand where it exits the tetramer. Each RuvB hexamer is contacted by two RuvA subunits (via domain III) on 2 adjacent RuvB subunits; this complex drives branch migration. In the full resolvosome a probable DNA-RuvA(4)-RuvB(12)-RuvC(2) complex forms which resolves the HJ.

The protein localises to the cytoplasm. The RuvA-RuvB-RuvC complex processes Holliday junction (HJ) DNA during genetic recombination and DNA repair, while the RuvA-RuvB complex plays an important role in the rescue of blocked DNA replication forks via replication fork reversal (RFR). RuvA specifically binds to HJ cruciform DNA, conferring on it an open structure. The RuvB hexamer acts as an ATP-dependent pump, pulling dsDNA into and through the RuvAB complex. HJ branch migration allows RuvC to scan DNA until it finds its consensus sequence, where it cleaves and resolves the cruciform DNA. The polypeptide is Holliday junction branch migration complex subunit RuvA (Wolbachia pipientis wMel).